We begin with the raw amino-acid sequence, 432 residues long: MSTHTKRPTSESLYEVAQKCIVGGVNSPSRSYKAVGGGAPVYMERGEGAYFYDVDGNRYIDYLAAYGPIITGHGHPHITEAITNASRNGLLYGTPHRLEIDFAHKLQQAIPSLEKVRFTNSGTEAVMTTIRVARAYTGRELVVKFSGCYHGHSDLMLIAAGSGPATLGSPDSAGVTKATAKEVITTPFNDIESYRQIMAEWGDQVACVLVEPIVGNFGIVEPQPGFLEAINEITHEHGALVIYDEVITAFRFTYGSAQELLNIRPDMTALGKIIGGGLPIGAYGGRQDIMEHVAPLGPAYQAGTMAGNPASMAAGIACLELLEQPGVYEEFDRLGAKLEQGILEAADTHGVTITINRLKGALTVYFTDETVVDYLGAERADSEMFGRFFKLMLEQGVNLAPSKYEAWFLTTAHTETDIDETIAAVNRAFAQL.

Lysine 272 carries the N6-(pyridoxal phosphate)lysine modification.

This sequence belongs to the class-III pyridoxal-phosphate-dependent aminotransferase family. HemL subfamily. In terms of assembly, homodimer. Pyridoxal 5'-phosphate serves as cofactor.

Its subcellular location is the cytoplasm. It catalyses the reaction (S)-4-amino-5-oxopentanoate = 5-aminolevulinate. It participates in porphyrin-containing compound metabolism; protoporphyrin-IX biosynthesis; 5-aminolevulinate from L-glutamyl-tRNA(Glu): step 2/2. This Exiguobacterium sibiricum (strain DSM 17290 / CCUG 55495 / CIP 109462 / JCM 13490 / 255-15) protein is Glutamate-1-semialdehyde 2,1-aminomutase 1.